Consider the following 141-residue polypeptide: HTH-type transcriptional regulator ZntR (141 aa).

The region spanning 1–70 (MYRIGELAKM…LESIRELLSI (70 aa)) is the HTH merR-type domain. Residues 4-23 (IGELAKMAEVTPDTIRYYEK) constitute a DNA-binding region (H-T-H motif). Positions 114, 115, 119, and 124 each coordinate Zn(2+).

As to quaternary structure, homodimer.

Its function is as follows. Zinc-responsive transcriptional regulator of zntA. This chain is HTH-type transcriptional regulator ZntR (zntR), found in Escherichia coli O157:H7.